The primary structure comprises 510 residues: Probable ADP-ribosylation factor-binding protein C1F3.05 (510 aa).

The 137-residue stretch at 14-150 (ATDQFNLEPN…LMAFRGYKFP (137 aa)) folds into the VHS domain. A GAT domain is found at 177–301 (LEAHKAKLQE…VIEECSNSDL (125 aa)). The GAE domain occupies 391 to 510 (TNSSLTSILQ…VEQGESHLPL (120 aa)).

The protein localises to the golgi apparatus. The protein resides in the trans-Golgi network. May play a role in the regulation of membrane traffic through the trans-Golgi network. In Schizosaccharomyces pombe (strain 972 / ATCC 24843) (Fission yeast), this protein is Probable ADP-ribosylation factor-binding protein C1F3.05.